Reading from the N-terminus, the 595-residue chain is MFS-type efflux pump MFS2 (595 aa).

Residue Asn62 is glycosylated (N-linked (GlcNAc...) asparagine). The next 12 membrane-spanning stretches (helical) occupy residues 69–89, 106–126, 136–156, 166–186, 197–217, 225–245, 301–321, 336–356, 381–401, 409–429, 442–462, and 478–498; these read WSIT…SSAY, VITL…LIWA, LLFF…AGSP, FFAG…IADM, GIFA…GGFL, WVEG…SIFL, PIVL…YMLF, PGIG…AMVI, LPVA…FAWT, IVSI…FLSL, ASVL…FPLF, and IPAF…IYGA.

It belongs to the major facilitator superfamily. DHA1 family. Polyamines/proton antiporter (TC 2.A.1.2.16) subfamily.

It localises to the cell membrane. Its function is as follows. MFS-type efflux pump involved in the modulation susceptibility to fluconazole and voriconazole, 2 azoles with similar molecular structure. The polypeptide is MFS-type efflux pump MFS2 (Trichophyton rubrum (strain ATCC MYA-4607 / CBS 118892) (Athlete's foot fungus)).